The following is a 379-amino-acid chain: MANLRKTHPLLKIANDALVDLPTPSNISAWWNFGSLLGLCLISQILTGLFLAMHYTSDISTAFSSVAHICRDVNYGWLIRNLHANGASFFFICLYLHIARGLYYGSYLYKETWNIGVVLFLLVMMTAFVGYVLPWGQMSFWGATVITNLLSAVPYVGNSLVQWIWGGFSVDNATLTRFFAFHFLFPFVVAGATMLHLLFLHETGSNNPVGLNSDADKIPFHPYFSYKDLLGFIIMLTALTMLALFYPNLLGDPDNFTPANPMVTPPHIKPEWYFLFAYAILRSIPNKLGGVLALLSSILVLMVVPILHTSKQRGLTFRPASQLLFWILVADMLVLTWIGGMPVEHPYIIIGQVASVLYFSLFLVLNPLVGWLENKVMNW.

4 consecutive transmembrane segments (helical) span residues Phe-33–Met-53, Trp-77–Ile-98, Trp-113–Leu-133, and Phe-178–Leu-198. Heme b-binding residues include His-83 and His-97. Heme b is bound by residues His-182 and His-196. Residue His-201 coordinates a ubiquinone. The next 4 membrane-spanning stretches (helical) occupy residues Tyr-226–Tyr-246, Leu-288–His-308, Ala-320–Gly-340, and Tyr-347–Pro-367.

This sequence belongs to the cytochrome b family. As to quaternary structure, the cytochrome bc1 complex contains 3 respiratory subunits (MT-CYB, CYC1 and UQCRFS1), 2 core proteins (UQCRC1 and UQCRC2) and probably 6 low-molecular weight proteins. It depends on heme b as a cofactor.

It localises to the mitochondrion inner membrane. Functionally, component of the ubiquinol-cytochrome c reductase complex (complex III or cytochrome b-c1 complex) that is part of the mitochondrial respiratory chain. The b-c1 complex mediates electron transfer from ubiquinol to cytochrome c. Contributes to the generation of a proton gradient across the mitochondrial membrane that is then used for ATP synthesis. The polypeptide is Cytochrome b (mt-cyb) (Anguilla rostrata (American eel)).